A 197-amino-acid chain; its full sequence is Rac-like GTP-binding protein 6 (197 aa).

13–20 serves as a coordination point for GTP; sequence GDGAVGKT. The Effector region signature appears at 35 to 43; sequence YVPTVFDNF. Residues 60 to 64 and 118 to 121 contribute to the GTP site; these read DTAGQ and TKLD. A Cysteine methyl ester modification is found at Cys-194. Cys-194 carries S-geranylgeranyl cysteine lipidation. A propeptide spans 195-197 (removed in mature form); the sequence is SIL.

Belongs to the small GTPase superfamily. Rho family.

The protein resides in the cytoplasm. Its subcellular location is the membrane. Functionally, inactive GDP-bound Rho GTPases reside in the cytosol, are found in a complex with Rho GDP-dissociation inhibitors (Rho GDIs), and are released from the GDI protein in order to translocate to membranes upon activation. The polypeptide is Rac-like GTP-binding protein 6 (RAC6) (Oryza sativa subsp. japonica (Rice)).